The chain runs to 230 residues: Fibrillarin-like rRNA/tRNA 2'-O-methyltransferase (230 aa).

Residues 87–88 (TT), 105–106 (EY), 130–131 (DA), and 150–153 (DVAQ) contribute to the S-adenosyl-L-methionine site.

In terms of assembly, interacts with nop5. Component of box C/D small ribonucleoprotein (sRNP) particles that contain rpl7ae, FlpA and nop5, plus a guide RNA.

Functionally, involved in pre-rRNA and tRNA processing. Utilizes the methyl donor S-adenosyl-L-methionine to catalyze the site-specific 2'-hydroxyl methylation of ribose moieties in rRNA and tRNA. Site specificity is provided by a guide RNA that base pairs with the substrate. Methylation occurs at a characteristic distance from the sequence involved in base pairing with the guide RNA. The chain is Fibrillarin-like rRNA/tRNA 2'-O-methyltransferase from Methanocaldococcus jannaschii (strain ATCC 43067 / DSM 2661 / JAL-1 / JCM 10045 / NBRC 100440) (Methanococcus jannaschii).